The following is a 478-amino-acid chain: V-type ATP synthase beta chain (478 aa).

It belongs to the ATPase alpha/beta chains family.

Its function is as follows. Produces ATP from ADP in the presence of a proton gradient across the membrane. The V-type beta chain is a regulatory subunit. The polypeptide is V-type ATP synthase beta chain (Thermus thermophilus (strain ATCC BAA-163 / DSM 7039 / HB27)).